Here is a 165-residue protein sequence, read N- to C-terminus: uncharacterized protein (165 aa).

A disordered region spans residues 28–97 (EASAPSGNPP…QLSQSLEVPT (70 aa)). Over residues 34 to 47 (GNPPPPPPPPPPPI) the composition is skewed to pro residues. Composition is skewed to polar residues over residues 54–66 (KSLNSPPNHQLDN) and 73–94 (AQHTNKNYTTSNIKTQLSQSLE).

This is an uncharacterized protein from Rickettsia prowazekii (strain Madrid E).